The primary structure comprises 144 residues: MARSILVLHGPNLNLLGTREPEVYGSRTLAQINEDLSSLANELGVSLSAWQSNHEGALVDRIQAASKDGTDFIIINAAAYTHTSVALRDALAGVAIPFIEVHLSNLYKRESFRHHSYLSDIAVGLISGLGADGYEAALRYAVRH.

The active-site Proton acceptor is the tyrosine 24. Substrate is bound by residues asparagine 76, histidine 82, and aspartate 89. Histidine 102 acts as the Proton donor in catalysis. Substrate-binding positions include 103-104 (LS) and arginine 113.

It belongs to the type-II 3-dehydroquinase family. Homododecamer.

The catalysed reaction is 3-dehydroquinate = 3-dehydroshikimate + H2O. It participates in metabolic intermediate biosynthesis; chorismate biosynthesis; chorismate from D-erythrose 4-phosphate and phosphoenolpyruvate: step 3/7. Catalyzes a trans-dehydration via an enolate intermediate. This Bordetella avium (strain 197N) protein is 3-dehydroquinate dehydratase.